Consider the following 222-residue polypeptide: Beta-amylase (222 aa).

A substrate-binding site is contributed by Thr-36. Glu-74 (proton acceptor) is an active-site residue. Residues 75 to 76 (NA) and Arg-114 contribute to the substrate site.

It belongs to the glycosyl hydrolase 14 family.

The catalysed reaction is Hydrolysis of (1-&gt;4)-alpha-D-glucosidic linkages in polysaccharides so as to remove successive maltose units from the non-reducing ends of the chains.. In Secale cereale (Rye), this protein is Beta-amylase (BMY1).